Consider the following 91-residue polypeptide: Probable Fe(2+)-trafficking protein (91 aa).

The protein belongs to the Fe(2+)-trafficking protein family.

Functionally, could be a mediator in iron transactions between iron acquisition and iron-requiring processes, such as synthesis and/or repair of Fe-S clusters in biosynthetic enzymes. The chain is Probable Fe(2+)-trafficking protein from Actinobacillus pleuropneumoniae serotype 5b (strain L20).